The following is a 546-amino-acid chain: Elongator complex protein 3 (546 aa).

Positions 81 to 371 (RTASGIAVVA…YRVQRDIPMP (291 aa)) constitute a Radical SAM core domain. C98, C108, and C111 together coordinate [4Fe-4S] cluster. Residues K163, 473–476 (ELHV), 496–498 (FGM), and Y529 each bind acetyl-CoA. The N-acetyltransferase domain maps to 395-546 (TQCRDVRTRE…EGPYMVKRLQ (152 aa)).

It belongs to the ELP3 family. Component of the elongator complex. [4Fe-4S] cluster is required as a cofactor.

The protein resides in the cytoplasm. It localises to the nucleus. It catalyses the reaction uridine(34) in tRNA + acetyl-CoA + S-adenosyl-L-methionine + H2O = 5-(carboxymethyl)uridine(34) in tRNA + 5'-deoxyadenosine + L-methionine + CoA + 2 H(+). Its pathway is tRNA modification; 5-methoxycarbonylmethyl-2-thiouridine-tRNA biosynthesis. Its function is as follows. Catalytic tRNA acetyltransferase subunit of the elongator complex which is required for multiple tRNA modifications, including mcm5U (5-methoxycarbonylmethyl uridine), mcm5s2U (5-methoxycarbonylmethyl-2-thiouridine), and ncm5U (5-carbamoylmethyl uridine). In the elongator complex, acts as a tRNA uridine(34) acetyltransferase by mediating formation of carboxymethyluridine in the wobble base at position 34 in tRNAs. The protein is Elongator complex protein 3 of Gallus gallus (Chicken).